Consider the following 350-residue polypeptide: Alcohol dehydrogenase (350 aa).

Cys46 serves as a coordination point for Zn(2+). The NAD(+) site is built by His47, Thr48, and His51. His69, Cys100, Cys103, Cys106, Cys114, and Cys156 together coordinate Zn(2+). 4 residues coordinate NAD(+): Gly183, Gly184, Leu185, and Asp204. Thr205 is modified (phosphothreonine). The NAD(+) site is built by Lys209 and Phe224. At Thr250 the chain carries Phosphothreonine. NAD(+) contacts are provided by Val271, Met273, Ser296, Val298, and Arg343.

The protein belongs to the zinc-containing alcohol dehydrogenase family. In terms of assembly, homotetramer. It depends on Zn(2+) as a cofactor.

The protein localises to the cytoplasm. The catalysed reaction is a primary alcohol + NAD(+) = an aldehyde + NADH + H(+). The enzyme catalyses a secondary alcohol + NAD(+) = a ketone + NADH + H(+). It carries out the reaction ethanol + NAD(+) = acetaldehyde + NADH + H(+). Functionally, reduces acetaldehyde to ethanol during the fermentation of glucose. The sequence is that of Alcohol dehydrogenase (adh1) from Schizosaccharomyces pombe (strain 972 / ATCC 24843) (Fission yeast).